The following is an 81-amino-acid chain: U17-lycotoxin-Ls1a (81 aa).

An N-terminal signal peptide occupies residues 1-22 (MSSKVQAVLLLVGVITFLAVHA). A propeptide spanning residues 23–34 (QEELSENTESER) is cleaved from the precursor. 3 disulfide bridges follow: Cys36/Cys51, Cys50/Cys67, and Cys58/Cys65.

The protein belongs to the neurotoxin 02 (plectoxin) family. In terms of tissue distribution, expressed by the venom gland.

Its subcellular location is the secreted. The polypeptide is U17-lycotoxin-Ls1a (Lycosa singoriensis (Wolf spider)).